Reading from the N-terminus, the 240-residue chain is MATLFIADLHLSLHEPAITAGFLRFLRHDAIHADALYILGDLFDAWIGDDDPQPLHATIAAELYVLHQRGIPCYFVHGNRDFLIGKRFAKQSGMTLLPTETVLDLYGQKILILHGDTLCTDDHHYQQFRRRVHNPFIQRLFLLLPLSSRVKIAAKMRATSQQENQKKSQQIMDVNHDAVLERLRHYQVKTMIHGHTHRPAIHQVDLGESYGRRAVLGAWHEEGSMIKVTPQNIELISFPF.

Mn(2+)-binding residues include Asp8, His10, Asp41, Asn79, and His114. Substrate is bound at residue 79–80 (NR). Residues Asp122, Ser160, Asn164, Lys167, and His195 each contribute to the substrate site. Mn(2+) contacts are provided by His195 and His197.

It belongs to the LpxH family. Mn(2+) is required as a cofactor.

It is found in the cell inner membrane. It catalyses the reaction UDP-2-N,3-O-bis[(3R)-3-hydroxytetradecanoyl]-alpha-D-glucosamine + H2O = 2-N,3-O-bis[(3R)-3-hydroxytetradecanoyl]-alpha-D-glucosaminyl 1-phosphate + UMP + 2 H(+). It functions in the pathway glycolipid biosynthesis; lipid IV(A) biosynthesis; lipid IV(A) from (3R)-3-hydroxytetradecanoyl-[acyl-carrier-protein] and UDP-N-acetyl-alpha-D-glucosamine: step 4/6. In terms of biological role, hydrolyzes the pyrophosphate bond of UDP-2,3-diacylglucosamine to yield 2,3-diacylglucosamine 1-phosphate (lipid X) and UMP by catalyzing the attack of water at the alpha-P atom. Involved in the biosynthesis of lipid A, a phosphorylated glycolipid that anchors the lipopolysaccharide to the outer membrane of the cell. This chain is UDP-2,3-diacylglucosamine hydrolase, found in Pectobacterium carotovorum subsp. carotovorum (strain PC1).